The primary structure comprises 453 residues: Exopolyphosphatase PRUNE1 (453 aa).

Met1 carries the N-acetylmethionine modification. Positions 28, 30, 106, and 179 each coordinate Mn(2+). The short motif at 106–108 (DHH) is the DHH motif element. An essential for homodimerization region spans residues 393–420 (SLISGLSQDEEDPPLPPTPMNSLVDECP). The interval 395–421 (ISGLSQDEEDPPLPPTPMNSLVDECPL) is disordered. Ser399 is subject to Phosphoserine. Thr410 carries the post-translational modification Phosphothreonine. At Ser414 the chain carries Phosphoserine.

The protein belongs to the PPase class C family. Prune subfamily. In terms of assembly, homooligomer. Able to homodimerize via its C-terminal domain. Interacts with NME1. Interacts with GSK3; at focal adhesion complexes where paxillin and vinculin are colocalized. Interacts with alpha and beta tubulin. Mn(2+) is required as a cofactor. Ubiquitously expressed. Seems to be overexpressed in aggressive sarcoma subtypes, such as leiomyosarcomas and malignant fibrous histiocytomas (MFH) as well as in the less malignant liposarcomas.

The protein localises to the cytoplasm. Its subcellular location is the nucleus. It localises to the cell junction. It is found in the focal adhesion. The enzyme catalyses diphosphate + H2O = 2 phosphate + H(+). Activated by magnesium ions and inhibited by manganese ions. Inhibited by dipyridamole, moderately sensitive to IBMX and inhibited by vinpocetine. Phosphodiesterase (PDE) that has higher activity toward cAMP than cGMP, as substrate. Plays a role in cell proliferation, migration and differentiation, and acts as a negative regulator of NME1. Plays a role in the regulation of neurogenesis. Involved in the regulation of microtubule polymerization. This chain is Exopolyphosphatase PRUNE1, found in Homo sapiens (Human).